The sequence spans 170 residues: Group 2 truncated hemoglobin 3-1 (170 aa).

A heme b-binding site is contributed by His-98.

Belongs to the truncated hemoglobin family. Group II subfamily. As to quaternary structure, homodimer when ferric.

In terms of biological role, hemoglobin-like protein that exhibits an unusual concentration-independent binding of O(2) and CO. Required for general plant development and during nodulation. May promote shoot organogenesis from root explants. The sequence is that of Group 2 truncated hemoglobin 3-1 from Medicago truncatula (Barrel medic).